The sequence spans 66 residues: Sarcoplasmic/endoplasmic reticulum calcium ATPase regulator ARLN (66 aa).

Position 1 is an N-acetylmethionine (M1). A disordered region spans residues 1–37 (MEVDAPGVDGRDGLRERRGFSEGGRQNFDVRPQSGAN). Residues 9–20 (DGRDGLRERRGF) are compositionally biased toward basic and acidic residues. Residues 45–65 (WLDLWLFILFDVVVFLFVYFL) form a helical membrane-spanning segment.

As to quaternary structure, homooligomer. Can also form heterooligomers with other sarcoplasmic/endoplasmic reticulum calcium ATPase (SERCA) regulators ERLN, PLN, SLN and STRIT1/DWORF. Monomer. Interacts as a monomer with ATP2A2/SERCA2; the interaction results in inhibition of ATP2A2 Ca(2+) affinity.

It is found in the endoplasmic reticulum membrane. Inhibits the activity of the calcium ATPases ATP2A2/SERCA2 and ATP2A3/SERCA3 by decreasing their apparent affinity for Ca(2+). The sequence is that of Sarcoplasmic/endoplasmic reticulum calcium ATPase regulator ARLN from Homo sapiens (Human).